Here is a 625-residue protein sequence, read N- to C-terminus: MAATMNKTPATTFLLIPAAASLVLLLAAAASVEASAFDYAGAFDKCLLFFEAQRSGKLPDDRLVRWRGDSALTDGFSQGVDLVGGYYDSGDHVKFGLPMAYAVTMLSWGVVEFEKEMVDGNKLHRVLDAIRWGTNYFVKAHTQHNALWVQVGDGDSDHLCWERAEDMSTPRTAFKIDINNPGSEVAGETAAALAAAAKAFKPYDRMYSDLLLLHSKQLFTFADTFRGKYDDSLQSAKKFYPSASGYQDELLWAAAWLYEATGDEQYLRYVSQNAEAFGGTGWAVTEFSWDNKYAGLQVLLSKVLFEQGGSAAGYADTLKQYQAKAEFFLCACLQKNNGHNVKMTPGGLMYVSDWSNMQYVSSSAFLLTVYADYLAESRGTLRCPDGEVKPAEILRFARSQVDYVLGKNPKGMSYMVGYGSYYPTHVHHRGASIPSIYAMNATVGCMESFDKYYNSKNADPNVLHGALVGGPDANDAYDDDRCNYQHAEPTLAGNAPMSGVFARLAASPADNTPEYTPAPNAPSPSNGGSPLEFVHTVTNTWKANGVDYYRHVVTAKNTCGHAITYLKLQIKELSGEIYGVSRTNAKDMYEFPSWMTRLDAGAQLTIVYIQGGPAAKIAVVEYKTA.

The first 34 residues, 1-34, serve as a signal peptide directing secretion; that stretch reads MAATMNKTPATTFLLIPAAASLVLLLAAAASVEA. The active-site Nucleophile is the aspartate 91. Residue histidine 427 is part of the active site. Residue asparagine 440 is glycosylated (N-linked (GlcNAc...) asparagine). Active-site residues include aspartate 479 and glutamate 488. Residues 509–530 are disordered; the sequence is ADNTPEYTPAPNAPSPSNGGSP.

Belongs to the glycosyl hydrolase 9 (cellulase E) family. In terms of tissue distribution, expressed in roots and flowers.

It is found in the secreted. The enzyme catalyses Endohydrolysis of (1-&gt;4)-beta-D-glucosidic linkages in cellulose, lichenin and cereal beta-D-glucans.. In Oryza sativa subsp. japonica (Rice), this protein is Endoglucanase 13 (GLU6).